The following is a 144-amino-acid chain: MAVRIKLTRLGKIRNPQYRVVVADARTRRDGRAIESIGKYHPKEEPSLIEIDSERVQYWLSVGAQPTEPVQRLLEITGDWQKFKGLPGAEGTLKVKAAKPSKLDLFNAALAAAENEPVAEAVTPKKKAKKDDAAAESTEAEAAE.

Residues 115–144 form a disordered region; sequence NEPVAEAVTPKKKAKKDDAAAESTEAEAAE.

Belongs to the bacterial ribosomal protein bS16 family.

The protein is Small ribosomal subunit protein bS16 of Nocardia farcinica (strain IFM 10152).